The chain runs to 168 residues: Photosystem I assembly protein Ycf3 (168 aa).

3 TPR repeats span residues 35–68, 72–105, and 120–153; these read AFTY…EIDP, SYIL…NPFL, and GEQA…TPGN.

The protein belongs to the Ycf3 family.

Its subcellular location is the plastid membrane. Its function is as follows. Essential for the assembly of the photosystem I (PSI) complex. May act as a chaperone-like factor to guide the assembly of the PSI subunits. The polypeptide is Photosystem I assembly protein Ycf3 (Cuscuta reflexa (Southern Asian dodder)).